A 596-amino-acid polypeptide reads, in one-letter code: Succinate dehydrogenase flavoprotein subunit (596 aa).

FAD contacts are provided by residues 18-23, 41-56, and aspartate 225; these read GAGGAG and TKLF…AQGG. Histidine 49 carries the tele-8alpha-FAD histidine modification. 2 residues coordinate substrate: histidine 246 and threonine 258. Arginine 290 (proton acceptor) is an active-site residue. Histidine 357 provides a ligand contact to substrate. Glutamate 391 is a binding site for FAD. Substrate is bound at residue arginine 402. 407-408 serves as a coordination point for FAD; the sequence is SL.

Belongs to the FAD-dependent oxidoreductase 2 family. FRD/SDH subfamily. As to quaternary structure, part of an enzyme complex containing four subunits: a flavoprotein, an iron-sulfur, cytochrome b-556, and a hydrophobic anchor protein. FAD serves as cofactor.

The protein resides in the cell inner membrane. It carries out the reaction a quinone + succinate = fumarate + a quinol. It functions in the pathway carbohydrate metabolism; tricarboxylic acid cycle; fumarate from succinate (bacterial route): step 1/1. The protein is Succinate dehydrogenase flavoprotein subunit (sdhA) of Rickettsia conorii (strain ATCC VR-613 / Malish 7).